The chain runs to 425 residues: Enolase (425 aa).

Position 165 (Gln165) interacts with (2R)-2-phosphoglycerate. The active-site Proton donor is Glu207. Mg(2+)-binding residues include Asp244, Glu285, and Asp312. Lys337, Arg366, Ser367, and Lys388 together coordinate (2R)-2-phosphoglycerate. The active-site Proton acceptor is the Lys337.

Belongs to the enolase family. The cofactor is Mg(2+).

The protein localises to the cytoplasm. The protein resides in the secreted. Its subcellular location is the cell surface. It catalyses the reaction (2R)-2-phosphoglycerate = phosphoenolpyruvate + H2O. The protein operates within carbohydrate degradation; glycolysis; pyruvate from D-glyceraldehyde 3-phosphate: step 4/5. Functionally, catalyzes the reversible conversion of 2-phosphoglycerate (2-PG) into phosphoenolpyruvate (PEP). It is essential for the degradation of carbohydrates via glycolysis. This chain is Enolase, found in Wolbachia sp. subsp. Brugia malayi (strain TRS).